A 41-amino-acid chain; its full sequence is Minor histocompatibility protein HB-1 (41 aa).

A loss of recognition by cytotoxic T lymphocyte (CTL) region spans residues 9–17 (EEKRGSLHV).

HB-1 forms a complex with MHC class I HLA-B44. In terms of tissue distribution, expressed in acute lymphoblastic leukemia B-cells and Epstein-Barr virus-transformed B-cells.

Its function is as follows. Precursor of the histocomplatibility antigen HB-1. More generally, minor histocomplatibility antigens (mHags) refer to immunogenic peptide which, when complexed with MHC, can generate an immune response after recognition by specific T-cells. The peptides are derived from polymorphic intracellular proteins, which are cleaved by normal pathways of antigen processing. The binding of these peptides to MHC class I or class II molecules and its expression on the cell surface can stimulate T-cell responses and thereby trigger graft rejection or graft-versus-host disease (GVHD) after hematopoietic stem cell transplantation from HLA-identical sibling donor. GVHD is a frequent complication after bone marrow transplantation (BMT), due to mismatch of minor histocomplatibility antigen in HLA-matched sibling marrow transplants. HB-1 is presented on the cell surface by MHC class I HLA-B44. This complex specifically elicits donor-cytotoxic T lymphocyte (CTL) reactivity in B-cell acute lymphoblastic leukemia (B-ALL) after treatment by HLA-identical allogenic bone marrow transplantation (BMT). It induces cell recognition and lysis by CTL. However, HB-1 restricted expression in B-ALL cells and not in normal tissues may allow a specific CTL reactivity against B-ALL without the risk of evoking graft-versus-host disease. The chain is Minor histocompatibility protein HB-1 (HMHB1) from Homo sapiens (Human).